The chain runs to 119 residues: Acidic phospholipase A2 CM-II (119 aa).

Positions 25, 27, and 29 each coordinate Ca(2+). The active site involves His45. Asp46 contacts Ca(2+). The active site involves Asp87.

This sequence belongs to the phospholipase A2 family. Group II subfamily. D49 sub-subfamily. Ca(2+) is required as a cofactor. Contains 6 disulfide bonds. In terms of tissue distribution, expressed by the venom gland.

Its subcellular location is the secreted. It carries out the reaction a 1,2-diacyl-sn-glycero-3-phosphocholine + H2O = a 1-acyl-sn-glycero-3-phosphocholine + a fatty acid + H(+). PLA2 catalyzes the calcium-dependent hydrolysis of the 2-acyl groups in 3-sn-phosphoglycerides. In Bitis nasicornis (Rhinoceros adder), this protein is Acidic phospholipase A2 CM-II.